The chain runs to 307 residues: UDP-3-O-acyl-N-acetylglucosamine deacetylase (307 aa).

The Zn(2+) site is built by His78, His237, and Asp241. His264 functions as the Proton donor in the catalytic mechanism.

Belongs to the LpxC family. Requires Zn(2+) as cofactor.

The catalysed reaction is a UDP-3-O-[(3R)-3-hydroxyacyl]-N-acetyl-alpha-D-glucosamine + H2O = a UDP-3-O-[(3R)-3-hydroxyacyl]-alpha-D-glucosamine + acetate. It functions in the pathway glycolipid biosynthesis; lipid IV(A) biosynthesis; lipid IV(A) from (3R)-3-hydroxytetradecanoyl-[acyl-carrier-protein] and UDP-N-acetyl-alpha-D-glucosamine: step 2/6. Functionally, catalyzes the hydrolysis of UDP-3-O-myristoyl-N-acetylglucosamine to form UDP-3-O-myristoylglucosamine and acetate, the committed step in lipid A biosynthesis. The protein is UDP-3-O-acyl-N-acetylglucosamine deacetylase of Azoarcus sp. (strain BH72).